The chain runs to 998 residues: Calcium-transporting ATPase 3, endoplasmic reticulum-type (998 aa).

Over 1-48 (MEDAYARSVSEVLDFFGVDPTKGLSDSQVVHHSRLYGRNVLPEEKRTP) the chain is Cytoplasmic. The helical transmembrane segment at 49-69 (FWKLVLKQFDDLLVKILIVAA) threads the bilayer. Topologically, residues 70 to 89 (IVSFVLALANGETGLTAFLE) are lumenal. A helical membrane pass occupies residues 90–109 (PFVILLILAANAAVGVITET). The Cytoplasmic segment spans residues 110–250 (NAEKALEELR…DEATPLKKKL (141 aa)). The chain crosses the membrane as a helical span at residues 251–270 (DEFGSFLAKVIAGICVLVWV). Residues 271-291 (VNIGHFSDPSHGGFFKGAIHY) are Lumenal-facing. The helical transmembrane segment at 292–309 (FKIAVALAVAAIPEGLPA) threads the bilayer. Ca(2+) is bound by residues valine 300, alanine 301, isoleucine 303, and glutamate 305. Topologically, residues 310–746 (VVTTCLALGT…AEGRAIYNNT (437 aa)) are cytoplasmic. Aspartate 347 acts as the 4-aspartylphosphate intermediate in catalysis. Positions 692 and 696 each coordinate Mg(2+). The chain crosses the membrane as a helical span at residues 747-766 (KQFIRYMISSNIGEVVCIFV). Ca(2+)-binding residues include asparagine 757 and glutamate 760. Over 767 to 776 (AAVLGIPDTL) the chain is Lumenal. The helical transmembrane segment at 777-797 (APVQLLWVNLVTDGLPATAIG) threads the bilayer. Ca(2+) is bound by residues asparagine 785, threonine 788, and aspartate 789. Over 798–817 (FNKQDSDVMKAKPRKVGEAV) the chain is Cytoplasmic. The helical transmembrane segment at 818 to 840 (VTGWLFFRYLVIGVYVGLATVAG) threads the bilayer. Over 841-883 (FIWWFVYSDGGPKLTYSELMNFETCALRETTYPCSIFEDRHPS) the chain is Lumenal. The helical transmembrane segment at 884-903 (TVAMTVLVVVEMFNALNNLS) threads the bilayer. Glutamate 894 provides a ligand contact to Ca(2+). The Cytoplasmic segment spans residues 904–916 (ENQSLLVITPRSN). Residues 917 to 935 (LWLVGSIILTMLLHVLILY) traverse the membrane as a helical segment. At 936-950 (VHPLAVLFSVTPLSW) the chain is on the lumenal side. Residues 951 to 971 (AEWTAVLYLSFPVIIIDELLK) traverse the membrane as a helical segment. Over 972–998 (FLSRNTGMRFRFRLRKADLLPKDRRDK) the chain is Cytoplasmic.

Belongs to the cation transport ATPase (P-type) (TC 3.A.3) family. Type IIA subfamily. In terms of tissue distribution, expressed in root cap, in elongation and differentiation zones of roots, in vascular tissues of roots, leaves, floral pedicels and style, in leaves, including hydathodes and guard cells, in stamens, in petals, in sepals and in siliques.

The protein resides in the golgi apparatus membrane. It is found in the endosome membrane. It localises to the prevacuolar compartment membrane. It carries out the reaction Ca(2+)(in) + ATP + H2O = Ca(2+)(out) + ADP + phosphate + H(+). In terms of biological role, this magnesium-dependent enzyme catalyzes the hydrolysis of ATP coupled with the translocation of calcium from the cytosol to an endomembrane compartment. Involved in calcium-enhanced root growth, in tolerance to toxic levels of manganese and in secretory processes. Has a crucial role in manganese nutrition, but is not involved in transporting copper, iron or zinc. The sequence is that of Calcium-transporting ATPase 3, endoplasmic reticulum-type from Arabidopsis thaliana (Mouse-ear cress).